The sequence spans 254 residues: UPF0246 protein lpp1320 (254 aa).

The protein belongs to the UPF0246 family.

This chain is UPF0246 protein lpp1320, found in Legionella pneumophila (strain Paris).